The primary structure comprises 478 residues: MSTNGDNHQVKDSLEQLRCHFTWELFIEDDEMPDLENRVLDQIEFLDTKYNVGIHNLLAYVKHLKGQNEEALKSLKEAEDLMQKEHANQASVRSLVTWSNFAWVYYHMGRLAEAQAYLDKVENICKKPSNPFRYRMECPEIDCEEGWALLKCGGKNYERAKACFEKALEGDHENPEFSTGYAISAYRLDGFKLATKGYRQFSLLPLRQAVSLNPDNGYLKVLLALKLQDNGQEAEGEKYLEEALANMSSQTYVFRYAAKFYRRKGSVDKALELLKKALQETPTSVLLHHQIGLCYKAQMIQIKEATKGQPRGQNREKIDKMIRLAIFHFESAVENKPTFEVAHLDLARMYIEAGNHRKAEETFQKLLCMKPVVEETMQDIHLQYARFQEFQKKSEINAIIHYLKAIKIEQTSFIRDKSINSLKKLVLKKLQRNALDLESLSLLGFVYKLKGNMNEALEYYERALRLAADFENSVRQGP.

6 TPR repeats span residues 52–85, 95–128, 139–174, 183–216, 218–249, and 251–284; these read VGIH…MQKE, LVTW…CKKP, PEID…DHEN, ISAY…NPDN, YLKV…NMSS, and TYVF…TPTS. Tryptophan 147 contributes to the mRNA binding site. RNA is bound at residue glycine 190. 4 residues coordinate RNA: lysine 259, histidine 289, glutamine 290, and lysine 336. TPR repeat units lie at residues 305–339, 340–373, 378–412, and 437–470; these read ATKG…KPTF, EVAH…KPVV, QDIH…EQTS, and LESL…AADF.

The protein belongs to the IFIT family. In terms of assembly, component of an interferon-dependent multiprotein complex, at least composed of IFIT1, IFIT2 and IFIT3. Interacts (via TPR repeats 1-4) with RPL15. Interacts with STING1/MITA; could disrupt STING1 interaction with MAVS or TBK1, acting as a negative-feedback regulator of virus-triggered signaling. Interacts with EIF3E; this could be an alternative way to inhibit translation. Phosphorylated. In terms of processing, ISGylated.

The protein localises to the cytoplasm. In terms of biological role, plays a key role in the innate immune response as part of an interferon-dependent multiprotein complex, recognizing and sequestering viral RNAs that lack host-specific 2'-O-methylation at their 5' cap. By distinguishing these RNAs from host mRNAs, inhibits their translation by competing with the translation initiation factor eIF4E. Could also prevent viral replication through its interaction with DNA replication origin-binding protein E1 of several viruses. Causes the translocation of E1 from the nucleus to the cytoplasm and can also inhibit its helicase activity in vitro. The sequence is that of Antiviral innate immune response effector IFIT1 from Macaca fascicularis (Crab-eating macaque).